A 217-amino-acid polypeptide reads, in one-letter code: Large ribosomal subunit protein uL3 (217 aa).

The disordered stretch occupies residues 129–161; that stretch reads SRGPMSHGSKNHRAPGSTGAGTTPGRIYPGKRM. The segment covering 142 to 153 has biased composition (low complexity); sequence APGSTGAGTTPG.

Belongs to the universal ribosomal protein uL3 family. In terms of assembly, part of the 50S ribosomal subunit. Forms a cluster with proteins L14 and L19.

Functionally, one of the primary rRNA binding proteins, it binds directly near the 3'-end of the 23S rRNA, where it nucleates assembly of the 50S subunit. In Prochlorococcus marinus (strain MIT 9515), this protein is Large ribosomal subunit protein uL3.